The primary structure comprises 159 residues: Large ribosomal subunit protein eL24 (159 aa).

Residues 118 to 159 (ANKAVRAAKAAANKEKKASQPKTQQKTAKNVKTAAPRVGGKR) form a disordered region. Over residues 137–147 (QPKTQQKTAKN) the composition is skewed to polar residues.

Belongs to the eukaryotic ribosomal protein eL24 family.

The protein is Large ribosomal subunit protein eL24 of Caenorhabditis elegans.